Reading from the N-terminus, the 814-residue chain is Flagellar radial spoke protein 1 (814 aa).

Residue Arg243 is modified to Asymmetric dimethylarginine. A disordered region spans residues 283-346 (VQSISTGNRE…PPPPAPKVDP (64 aa)). The segment covering 303–329 (PEEDEEEEKEEEKEEPEEGEEGEEGEG) has biased composition (acidic residues). Arg428 is modified (asymmetric dimethylarginine). 6 MORN repeats span residues 577-597 (YFGS…FATG), 600-622 (YAGE…DGGT), 623-645 (YVGE…DGSV), 646-662 (YTGS…GVYW), 671-685 (GEWK…GTYE), and 691-707 (FEGE…ATYT). The interval 739–769 (GIPPGSGDEPQLDEEGQPIEDTDKPPLPAHP) is disordered. Residues 748–758 (PQLDEEGQPIE) are compositionally biased toward acidic residues.

Asymmetrically dimethylated at Arg-243 and Arg-428 during flagellum resorption. Probably methylated by PRMT1.

The protein resides in the cytoplasm. The protein localises to the cytoskeleton. Its subcellular location is the flagellum axoneme. Flagellar radial spokes contribute to the regulation of dynein arm activity and thus the pattern of flagellar bending. They consist of a thin stalk, which is attached to the a subfiber of the outer doublet microtubule, and a bulbous head, which is attached to the stalk and appears to interact with the projections from the central pair of microtubules. This Chlamydomonas reinhardtii (Chlamydomonas smithii) protein is Flagellar radial spoke protein 1.